Consider the following 287-residue polypeptide: Octanoyl-[GcvH]:protein N-octanoyltransferase (287 aa).

One can recognise a BPL/LPL catalytic domain in the interval 45 to 253 (GESPATARSW…ELKELSGRLY (209 aa)). Cys150 serves as the catalytic Acyl-thioester intermediate.

The protein belongs to the octanoyltransferase LipL family.

The catalysed reaction is N(6)-octanoyl-L-lysyl-[glycine-cleavage complex H protein] + L-lysyl-[lipoyl-carrier protein] = N(6)-octanoyl-L-lysyl-[lipoyl-carrier protein] + L-lysyl-[glycine-cleavage complex H protein]. It functions in the pathway protein modification; protein lipoylation via endogenous pathway; protein N(6)-(lipoyl)lysine from octanoyl-[acyl-carrier-protein]. In terms of biological role, catalyzes the amidotransfer (transamidation) of the octanoyl moiety from octanoyl-GcvH to the lipoyl domain of the E2 subunit of lipoate-dependent enzymes. The chain is Octanoyl-[GcvH]:protein N-octanoyltransferase from Bacillus velezensis (strain DSM 23117 / BGSC 10A6 / LMG 26770 / FZB42) (Bacillus amyloliquefaciens subsp. plantarum).